The following is a 189-amino-acid chain: GTPase NRas (189 aa).

GTP contacts are provided by residues 10–18 (GAGGVGKSA) and 29–30 (VD). Positions 32 to 40 (YDPTIEDSY) match the Effector region motif. Position 57 to 61 (57 to 61 (DTAGQ)) interacts with GTP. Ser89 bears the Phosphoserine mark. 116–119 (NKCD) serves as a coordination point for GTP. The segment at 166–185 (YRMKKLNSNDDGTQGCMGLP) is hypervariable region. A Glycyl lysine isopeptide (Lys-Gly) (interchain with G-Cter in ubiquitin) cross-link involves residue Lys170. The S-palmitoyl cysteine moiety is linked to residue Cys181. A lipid anchor (S-farnesyl cysteine) is attached at Cys186. Residues 187–189 (VVM) constitute a propeptide, removed in mature form.

This sequence belongs to the small GTPase superfamily. Ras family. In terms of assembly, interacts (active GTP-bound form preferentially) with RGS14. Interacts (active GTP-bound form) with RASSF7. Interacts (active GTP-bound form) with both SHOC2 and PP1c (all isoforms) to form a tertiary complex; SHOC2 and PP1c preferably bind M-Ras/MRAS, but they also bind K-Ras/KRAS, N-Ras/NRAS and H-Ras/HRAS. Post-translationally, palmitoylated by the ZDHHC9-GOLGA7 complex. Depalmitoylated by ABHD17A, ABHD17B and ABHD17C. A continuous cycle of de- and re-palmitoylation regulates rapid exchange between plasma membrane and Golgi. In terms of processing, acetylation at Lys-104 prevents interaction with guanine nucleotide exchange factors (GEFs). Ubiquitinated by the BCR(LZTR1) E3 ubiquitin ligase complex at Lys-170 in a non-degradative manner, leading to inhibit Ras signaling by decreasing Ras association with membranes. Post-translationally, phosphorylation at Ser-89 enhances NRAS association with its downstream effectors.

It localises to the cell membrane. The protein resides in the golgi apparatus membrane. It catalyses the reaction GTP + H2O = GDP + phosphate + H(+). With respect to regulation, alternates between an inactive form bound to GDP and an active form bound to GTP. Activated by a guanine nucleotide-exchange factor (GEF) and inactivated by a GTPase-activating protein (GAP). Its function is as follows. Ras proteins bind GDP/GTP and possess intrinsic GTPase activity. This Cavia porcellus (Guinea pig) protein is GTPase NRas (NRAS).